The chain runs to 273 residues: MSQRTVFFISDGTGITAETFGNAILAQFEFKPRHVRLPFIDSVDKAHQAIRQINHAAEVEGKRPIVFTTLVNMEILAVIKTHCNGMLLDMFGMFVAPLESELGIKSNHRVGRFSDASKSKEYDDRIEAINFSLAHDDGQSNKDLAGSDVILVGVSRSGKTPTSLYLAMQYGLKASNYPLIPEDFERRQLPPALVPHRKKIFGLTIAPERLSQIRNERRPHSTYASLANCRHEIHEAEAMMRREGIRWLSTTTKSIEEISTTILQEIRPERLEY.

Residue 153-160 participates in ADP binding; that stretch reads GVSRSGKT.

Belongs to the pyruvate, phosphate/water dikinase regulatory protein family. PSRP subfamily.

It catalyses the reaction [pyruvate, water dikinase] + ADP = [pyruvate, water dikinase]-phosphate + AMP + H(+). The catalysed reaction is [pyruvate, water dikinase]-phosphate + phosphate + H(+) = [pyruvate, water dikinase] + diphosphate. In terms of biological role, bifunctional serine/threonine kinase and phosphorylase involved in the regulation of the phosphoenolpyruvate synthase (PEPS) by catalyzing its phosphorylation/dephosphorylation. This is Putative phosphoenolpyruvate synthase regulatory protein from Polaromonas sp. (strain JS666 / ATCC BAA-500).